Here is a 279-residue protein sequence, read N- to C-terminus: Energy-coupling factor transporter ATP-binding protein EcfA (279 aa).

The ABC transporter domain occupies 5-240; sequence IELEKINYKY…GPELIDLGLD (236 aa). 40-47 is a binding site for ATP; that stretch reads GHNGSGKS.

This sequence belongs to the ABC transporter superfamily. Energy-coupling factor EcfA family. Forms a stable energy-coupling factor (ECF) transporter complex composed of 2 membrane-embedded substrate-binding proteins (S component), 2 ATP-binding proteins (A component) and 2 transmembrane proteins (T component).

It is found in the cell membrane. In terms of biological role, ATP-binding (A) component of a common energy-coupling factor (ECF) ABC-transporter complex. Unlike classic ABC transporters this ECF transporter provides the energy necessary to transport a number of different substrates. This Enterococcus faecium (Streptococcus faecium) protein is Energy-coupling factor transporter ATP-binding protein EcfA.